Reading from the N-terminus, the 243-residue chain is GTP cyclohydrolase 1 type 2 (243 aa).

5 residues coordinate a divalent metal cation: H63, H64, D102, H209, and E213.

This sequence belongs to the GTP cyclohydrolase I type 2/NIF3 family. As to quaternary structure, homohexamer.

It catalyses the reaction GTP + H2O = 7,8-dihydroneopterin 3'-triphosphate + formate + H(+). The protein operates within cofactor biosynthesis; 7,8-dihydroneopterin triphosphate biosynthesis; 7,8-dihydroneopterin triphosphate from GTP: step 1/1. In terms of biological role, converts GTP to dihydroneopterin triphosphate. Is not active with GDP, GMP, ATP, CTP or UTP as substrate. In Helicobacter pylori (strain ATCC 700392 / 26695) (Campylobacter pylori), this protein is GTP cyclohydrolase 1 type 2.